The following is a 73-amino-acid chain: NAD(P)H-quinone oxidoreductase subunit L (73 aa).

2 helical membrane passes run 7-27 (LIGL…PFLF) and 44-64 (VLMF…APFM).

Belongs to the complex I NdhL subunit family. In terms of assembly, NDH-1 can be composed of about 15 different subunits; different subcomplexes with different compositions have been identified which probably have different functions.

It localises to the cellular thylakoid membrane. It catalyses the reaction a plastoquinone + NADH + (n+1) H(+)(in) = a plastoquinol + NAD(+) + n H(+)(out). The enzyme catalyses a plastoquinone + NADPH + (n+1) H(+)(in) = a plastoquinol + NADP(+) + n H(+)(out). In terms of biological role, NDH-1 shuttles electrons from an unknown electron donor, via FMN and iron-sulfur (Fe-S) centers, to quinones in the respiratory and/or the photosynthetic chain. The immediate electron acceptor for the enzyme in this species is believed to be plastoquinone. Couples the redox reaction to proton translocation, and thus conserves the redox energy in a proton gradient. Cyanobacterial NDH-1 also plays a role in inorganic carbon-concentration. This is NAD(P)H-quinone oxidoreductase subunit L from Synechococcus sp. (strain JA-3-3Ab) (Cyanobacteria bacterium Yellowstone A-Prime).